Consider the following 159-residue polypeptide: Ribosomal RNA large subunit methyltransferase H (159 aa).

Residues Leu-76, Gly-108, and 127 to 132 contribute to the S-adenosyl-L-methionine site; that span reads FGRLTL.

This sequence belongs to the RNA methyltransferase RlmH family. In terms of assembly, homodimer.

The protein resides in the cytoplasm. The enzyme catalyses pseudouridine(1915) in 23S rRNA + S-adenosyl-L-methionine = N(3)-methylpseudouridine(1915) in 23S rRNA + S-adenosyl-L-homocysteine + H(+). Its function is as follows. Specifically methylates the pseudouridine at position 1915 (m3Psi1915) in 23S rRNA. In Listeria monocytogenes serovar 1/2a (strain ATCC BAA-679 / EGD-e), this protein is Ribosomal RNA large subunit methyltransferase H.